Reading from the N-terminus, the 153-residue chain is MARNTLSSRFRRVDIDEFDENKFVDEHEEAAAASGEPGPDPCEVDGLLRQGDMLRAFHAALRNSPINTKNQAVKERAQGIVLKVLTNFKSSEIEQAVQSLDRNGIDLLMKYIYKGFEKPTENSSAVLLQWHEKALAVGGLGSIIRVLTARKTV.

Serine 64 carries the phosphoserine modification.

The protein belongs to the ARPC5 family. May be a component of the Arp2/3 complex in which it may replace ARPC5.

It localises to the cytoplasm. Its subcellular location is the cytoskeleton. In terms of biological role, may function as component of the Arp2/3 complex which is involved in regulation of actin polymerization and together with an activating nucleation-promoting factor (NPF) mediates the formation of branched actin networks. This Rattus norvegicus (Rat) protein is Actin-related protein 2/3 complex subunit 5-like protein (Arpc5l).